Reading from the N-terminus, the 175-residue chain is Alkyl hydroperoxide reductase AhpD (175 aa).

Cys-131 acts as the Proton donor in catalysis. Cys-131 and Cys-134 form a disulfide bridge. The Cysteine sulfenic acid (-SOH) intermediate role is filled by Cys-134.

This sequence belongs to the AhpD family.

The catalysed reaction is N(6)-[(R)-dihydrolipoyl]-L-lysyl-[lipoyl-carrier protein] + a hydroperoxide = N(6)-[(R)-lipoyl]-L-lysyl-[lipoyl-carrier protein] + an alcohol + H2O. In terms of biological role, antioxidant protein with alkyl hydroperoxidase activity. Required for the reduction of the AhpC active site cysteine residues and for the regeneration of the AhpC enzyme activity. In Brucella anthropi (strain ATCC 49188 / DSM 6882 / CCUG 24695 / JCM 21032 / LMG 3331 / NBRC 15819 / NCTC 12168 / Alc 37) (Ochrobactrum anthropi), this protein is Alkyl hydroperoxide reductase AhpD.